We begin with the raw amino-acid sequence, 466 residues long: 23S rRNA (uracil(1939)-C(5))-methyltransferase RlmD (466 aa).

The TRAM domain occupies 11 to 69 (KITDTKHKEIVINRLDHLGAGIGHLNNKSIFVDGLLPGEKALVQITDDKKQYARAKVIK). Positions 82, 88, 91, and 184 each coordinate [4Fe-4S] cluster. S-adenosyl-L-methionine is bound by residues Gln287, Phe316, Asn321, Glu337, Asn364, and Asp385. The active-site Nucleophile is Cys411.

Belongs to the class I-like SAM-binding methyltransferase superfamily. RNA M5U methyltransferase family. RlmD subfamily.

The enzyme catalyses uridine(1939) in 23S rRNA + S-adenosyl-L-methionine = 5-methyluridine(1939) in 23S rRNA + S-adenosyl-L-homocysteine + H(+). Catalyzes the formation of 5-methyl-uridine at position 1939 (m5U1939) in 23S rRNA. In Photobacterium profundum (strain SS9), this protein is 23S rRNA (uracil(1939)-C(5))-methyltransferase RlmD.